A 108-amino-acid polypeptide reads, in one-letter code: UPF0102 protein Tpet_0671 (108 aa).

It belongs to the UPF0102 family.

The chain is UPF0102 protein Tpet_0671 from Thermotoga petrophila (strain ATCC BAA-488 / DSM 13995 / JCM 10881 / RKU-1).